We begin with the raw amino-acid sequence, 355 residues long: Acyl-CoA desaturase 1 (355 aa).

Residues 1 to 68 (MPAHMLQEIS…EGPPPKLEYV (68 aa)) lie on the Cytoplasmic side of the membrane. Residues 9-20 (ISSSYTTTTTIT) show a composition bias toward low complexity. Residues 9–33 (ISSSYTTTTTITAPPSGNEREKVKT) form a disordered region. A helical transmembrane segment spans residues 69–89 (WRNIILMVLLHLGGLYGIILV). Asparagine 71 is a substrate binding site. The Lumenal portion of the chain corresponds to 90 to 93 (PSCK). The chain crosses the membrane as a helical span at residues 94-114 (LYTCLFGIFYYMTSALGITAG). Residues 115-213 (AHRLWSHRTY…EKLVMFQRRY (99 aa)) lie on the Cytoplasmic side of the membrane. Fe cation contacts are provided by histidine 116 and histidine 121. Residues 116 to 121 (HRLWSH) carry the Histidine box-1 motif. Substrate contacts are provided by asparagine 144, arginine 151, and aspartate 152. Fe cation is bound by residues histidine 153, histidine 156, and histidine 157. The short motif at 153 to 157 (HRAHH) is the Histidine box-2 element. Residues arginine 184 and lysine 185 each contribute to the substrate site. The helical transmembrane segment at 214–233 (YKPGLLLMCFILPTLVPWYC) threads the bilayer. Over 234 to 237 (WGET) the chain is Lumenal. Residues 238-259 (FVNSLFVSTFLRYTLVLNATWL) form a helical membrane-spanning segment. Tryptophan 258 lines the substrate pocket. Residues 260 to 355 (VNSAAHLYGY…RTGDGSHKSS (96 aa)) lie on the Cytoplasmic side of the membrane. Histidine 265, histidine 294, histidine 297, and histidine 298 together coordinate Fe cation. Residues 294–298 (HNYHH) carry the Histidine box-3 motif.

It belongs to the fatty acid desaturase type 1 family. Requires Fe(2+) as cofactor. Detected in liver (at protein level). Detected in skin and liver. Detected in sebaceous gland, but not in hair follicle. Detected in white and brown adipose tissue, eyelid, Harderian gland, and at lower levels in Meibomian gland, eyeball and adrenal gland. Highly expressed in liver, and detected at low levels in brain, heart, lung, stomach, skeletal muscle and kidney.

It is found in the endoplasmic reticulum membrane. Its subcellular location is the microsome membrane. It carries out the reaction octadecanoyl-CoA + 2 Fe(II)-[cytochrome b5] + O2 + 2 H(+) = (9Z)-octadecenoyl-CoA + 2 Fe(III)-[cytochrome b5] + 2 H2O. Its function is as follows. Stearoyl-CoA desaturase that utilizes O(2) and electrons from reduced cytochrome b5 to introduce the first double bond into saturated fatty acyl-CoA substrates. Catalyzes the insertion of a cis double bond at the Delta-9 position into fatty acyl-CoA substrates including palmitoyl-CoA and stearoyl-CoA. Gives rise to a mixture of 16:1 and 18:1 unsaturated fatty acids. Plays an important role in lipid biosynthesis. Plays an important role in regulating the expression of genes that are involved in lipogenesis and in regulating mitochondrial fatty acid oxidation. Plays an important role in body energy homeostasis. Contributes to the biosynthesis of membrane phospholipids, cholesterol esters and triglycerides. Required for normal development of sebaceous glands. Required for the biosynthesis of normal levels of Delta-9 unsaturated fatty acids and 1-alkyl-2,3-diacylglycerol in the Harderian gland. Required for normal production of meibum, an oily material that prevents drying of the cornea. The polypeptide is Acyl-CoA desaturase 1 (Scd1) (Mus musculus (Mouse)).